A 41-amino-acid chain; its full sequence is Large ribosomal subunit protein bL36 (41 aa).

The protein belongs to the bacterial ribosomal protein bL36 family.

The protein is Large ribosomal subunit protein bL36 of Parvibaculum lavamentivorans (strain DS-1 / DSM 13023 / NCIMB 13966).